We begin with the raw amino-acid sequence, 101 residues long: Helix-loop-helix protein 17 (101 aa).

The basic motif stretch occupies residues 14-27; it reads GVRLSINLRERCRM. In terms of domain architecture, bHLH spans 14–68; that stretch reads GVRLSINLRERCRMHDLNEALDDLRAVIPYAHGGSVRKLSKIATLLLAKNHIIMQ. The segment at 28 to 68 is helix-loop-helix motif; that stretch reads HDLNEALDDLRAVIPYAHGGSVRKLSKIATLLLAKNHIIMQ.

In terms of tissue distribution, expressed in neuronal tissues of the head, including sheath cells of the cephalic sensilla (CEPsh) glia.

The protein resides in the nucleus. In terms of biological role, probable transcription factor that regulates the expression of dopamine receptors dop-1, dop-2 and dop-3 and thus dopamine-dependent behaviors. May act redundantly with hlh-31 and hlh-32 to regulate ventral CEPsh glia functions. May play a role in chemotactic responses in larvae. The chain is Helix-loop-helix protein 17 from Caenorhabditis elegans.